Reading from the N-terminus, the 478-residue chain is Cytochrome c-552 (478 aa).

Positions 1–26 are cleaved as a signal peptide; sequence MARKTLRARRFFSLIFPFFFITSVYA. A heme c-binding site is contributed by His94. Heme is bound by residues Cys122, Cys125, and Lys126. Heme c is bound by residues Cys160, Cys163, His164, Cys209, Cys212, and His213. Ca(2+) contacts are provided by Glu215, Tyr216, Lys261, and Gln263. Tyr216 is a substrate binding site. His264 contacts substrate. 9 residues coordinate heme c: His275, Cys282, Cys285, His286, His301, Cys314, Cys317, His318, and His393.

This sequence belongs to the cytochrome c-552 family. Ca(2+) is required as a cofactor. Requires heme c as cofactor.

It is found in the periplasm. It catalyses the reaction 6 Fe(III)-[cytochrome c] + NH4(+) + 2 H2O = 6 Fe(II)-[cytochrome c] + nitrite + 8 H(+). It participates in nitrogen metabolism; nitrate reduction (assimilation). Its function is as follows. Catalyzes the reduction of nitrite to ammonia, consuming six electrons in the process. In Salmonella schwarzengrund (strain CVM19633), this protein is Cytochrome c-552.